Reading from the N-terminus, the 509-residue chain is Maturase K (509 aa).

This sequence belongs to the intron maturase 2 family. MatK subfamily.

It localises to the plastid. The protein resides in the chloroplast. Functionally, usually encoded in the trnK tRNA gene intron. Probably assists in splicing its own and other chloroplast group II introns. This is Maturase K from Anthocercis angustifolia (Narrow-leaf ray-flower).